Reading from the N-terminus, the 43-residue chain is S-layer protein 1 (43 aa).

It localises to the secreted. The protein resides in the cell wall. It is found in the S-layer. Functionally, the S-layer is a paracrystalline mono-layered assembly of proteins which coat the surface of bacteria. This chain is S-layer protein 1, found in Bacillus thuringiensis subsp. konkukian.